The sequence spans 247 residues: Golgi-associated RAB2 interactor protein 5A (247 aa).

Over residues Met-1–Gly-16 the composition is skewed to pro residues. Disordered stretches follow at residues Met-1 to Arg-22 and Gly-60 to Arg-92.

This sequence belongs to the GARIN family. In terms of assembly, interacts (via N-terminus) with RAB2B (in GTP-bound form).

It is found in the golgi apparatus. RAB2B effector protein which promotes cytosolic DNA-induced innate immune responses. Regulates IFN responses against DNA viruses by regulating the CGAS-STING signaling axis. The chain is Golgi-associated RAB2 interactor protein 5A from Homo sapiens (Human).